Consider the following 106-residue polypeptide: Small ribosomal subunit protein uS10 (106 aa).

The protein belongs to the universal ribosomal protein uS10 family. Part of the 30S ribosomal subunit.

In terms of biological role, involved in the binding of tRNA to the ribosomes. This Solibacter usitatus (strain Ellin6076) protein is Small ribosomal subunit protein uS10.